A 158-amino-acid polypeptide reads, in one-letter code: uncharacterized protein (158 aa).

A run of 4 helical transmembrane segments spans residues 12-32, 39-59, 90-110, and 113-133; these read IITL…AVVV, LDIL…SLSV, LIYL…FNTI, and IIST…WLPL.

Its subcellular location is the cell membrane. This is an uncharacterized protein from Mycoplasma genitalium (strain ATCC 33530 / DSM 19775 / NCTC 10195 / G37) (Mycoplasmoides genitalium).